Here is a 606-residue protein sequence, read N- to C-terminus: Elongation factor 4 (606 aa).

Positions 10–192 constitute a tr-type G domain; sequence IRKKNFCIIA…AICKYVPSPR (183 aa). Residues 22 to 27 and 139 to 142 contribute to the GTP site; these read DHGKST and NKID.

This sequence belongs to the TRAFAC class translation factor GTPase superfamily. Classic translation factor GTPase family. LepA subfamily.

The protein resides in the cell inner membrane. The enzyme catalyses GTP + H2O = GDP + phosphate + H(+). Required for accurate and efficient protein synthesis under certain stress conditions. May act as a fidelity factor of the translation reaction, by catalyzing a one-codon backward translocation of tRNAs on improperly translocated ribosomes. Back-translocation proceeds from a post-translocation (POST) complex to a pre-translocation (PRE) complex, thus giving elongation factor G a second chance to translocate the tRNAs correctly. Binds to ribosomes in a GTP-dependent manner. This chain is Elongation factor 4, found in Borreliella burgdorferi (strain ATCC 35210 / DSM 4680 / CIP 102532 / B31) (Borrelia burgdorferi).